Here is a 571-residue protein sequence, read N- to C-terminus: Coenzyme A biosynthesis protein 3 (571 aa).

Disordered stretches follow at residues 1–72 and 100–120; these read MTDE…YKND and INTS…PSLP. The segment covering 8–35 has biased composition (polar residues); it reads SDQNMNGKQGVNLISSLPTTQVPVSILT. Ser42 is subject to Phosphoserine. A compositionally biased stretch (basic and acidic residues) spans 43 to 59; that stretch reads IHDESNFERSDSHEDQS. Residues 60 to 72 are compositionally biased toward polar residues; sequence KSNSNRRNIYKND. Ser116, Ser121, and Ser124 each carry phosphoserine. 2 disordered regions span residues 140–171 and 209–244; these read ISNK…LQEQ and IFKE…SMEK. The segment covering 146–171 has biased composition (low complexity); that stretch reads KQQQQQEQLQQNQQQEEQQKAQLQEQ. Ser264 carries the post-translational modification Phosphoserine. Positions 507–571 are disordered; it reads RDEETGDKEQ…EDEEDVKTEV (65 aa). Acidic residues predominate over residues 516–571; sequence QEQEEQEGADNEDDDDEDDEEDEEDEEEEEALNETASDESNDEEDEEDEEDVKTEV.

This sequence belongs to the HFCD (homooligomeric flavin containing Cys decarboxylase) superfamily. In terms of assembly, component of the phosphopantothenoylcysteine decarboxylase (PPCDC) complex, a heterotrimer composed of CAB3, HAL3 and VHS3.

It localises to the cytoplasm. In terms of biological role, component of the phosphopantothenoylcysteine decarboxylase (PPCDC) involved in the coenzyme A synthesis. This Saccharomyces cerevisiae (strain ATCC 204508 / S288c) (Baker's yeast) protein is Coenzyme A biosynthesis protein 3 (CAB3).